Here is a 247-residue protein sequence, read N- to C-terminus: GTP cyclohydrolase 1 type 2 homolog (247 aa).

Residues histidine 63, histidine 64, aspartate 101, histidine 215, and glutamate 219 each contribute to the a divalent metal cation site.

The protein belongs to the GTP cyclohydrolase I type 2/NIF3 family. Homohexamer.

The chain is GTP cyclohydrolase 1 type 2 homolog from Buchnera aphidicola subsp. Schizaphis graminum (strain Sg).